We begin with the raw amino-acid sequence, 259 residues long: Chaplin-C (259 aa).

The first 28 residues, 1-28 (MRQATRKGLMTMAAATGVIAAAGGAAHA), serve as a signal peptide directing secretion. The Chaplin 1 domain maps to 39-79 (SPGVLSGNTVQAPVHVPVNVCGNTVDVVGVLNPAMGNACAN). A compositionally biased stretch (gly residues) spans 84-112 (ASGGHGGHGGHGGYGDSGGEGGSHGGSHA). 2 disordered regions span residues 84–129 (ASGG…NHVE) and 154–227 (GNDC…ALAE). In terms of domain architecture, Chaplin 2 spans 119–159 (SPGVGSGNHVEVPIDVPVNVCGNSIDVVGALNPTTGNDCGN). The segment covering 180–189 (HNPGNPGNPD) has biased composition (low complexity). The LPXTG sorting signal signature appears at 225–229 (LAETG). The residue at position 228 (Thr-228) is a Pentaglycyl murein peptidoglycan amidated threonine. Residues 229-259 (GSDLPLGLALPVGAGALLAGTVLYRKARASV) constitute a propeptide, removed by sortase.

This sequence belongs to the chaplin family. Long chaplin subfamily.

Its subcellular location is the secreted. It localises to the cell wall. In terms of biological role, one of 8 partially redundant surface-active proteins required for efficient formation of aerial mycelium; the short chaplins assemble into a hydrophobic, amyloidal fibrillar surface layer that envelopes and protects aerial hyphae and spores, presumably anchored to the long chaplins. Chaplins have an overlapping function with the surface-active SapB peptide; chaplins are essential on minimal medium while on rich medium both chaplins and SapB are required for efficient aerial hyphae formation. A minimal chaplin strain capable of forming aerial mycelium/hyphae on minimal medium contains ChpC, ChpE and ChpH. The strain also has restored rodlet formation on the hyphae surface. The long chaplins (ChpA, ChpB, ChpC) are not absolutely necessary for short chaplin localization or rodlet formation, but probably play a role in initiating aerial hyphae development. Chaplins are also involved in cell attachment to a hydrophobic surface. In Streptomyces coelicolor (strain ATCC BAA-471 / A3(2) / M145), this protein is Chaplin-C.